The primary structure comprises 279 residues: Probable endonuclease 4 (279 aa).

Zn(2+)-binding residues include His-66, His-106, Glu-142, Asp-175, His-178, His-212, Asp-225, His-227, and Glu-257.

Belongs to the AP endonuclease 2 family. Requires Zn(2+) as cofactor.

It catalyses the reaction Endonucleolytic cleavage to 5'-phosphooligonucleotide end-products.. Endonuclease IV plays a role in DNA repair. It cleaves phosphodiester bonds at apurinic or apyrimidinic (AP) sites, generating a 3'-hydroxyl group and a 5'-terminal sugar phosphate. This is Probable endonuclease 4 from Moorella thermoacetica (strain ATCC 39073 / JCM 9320).